The primary structure comprises 374 residues: UPF0496 protein At3g28270 (374 aa).

A coiled-coil region spans residues 171–210 (KVLTTQFERIKKQQESLLEEVSETRKKIQDEISNLEKKTL). The next 2 membrane-spanning stretches (helical) occupy residues 214 to 234 (VVFGAAFAIVAVASIALIATG) and 235 to 255 (VGAAAGFGALAAPLLAAGWAG). Residues 256–321 (VYTTLDKKKD…MLKLVDNAID (66 aa)) adopt a coiled-coil conformation.

It belongs to the UPF0496 family.

The protein resides in the membrane. This Arabidopsis thaliana (Mouse-ear cress) protein is UPF0496 protein At3g28270.